We begin with the raw amino-acid sequence, 89 residues long: DNA-directed RNA polymerase subunit omega (89 aa).

The protein belongs to the RNA polymerase subunit omega family. The RNAP catalytic core consists of 2 alpha, 1 beta, 1 beta' and 1 omega subunit. When a sigma factor is associated with the core the holoenzyme is formed, which can initiate transcription.

It carries out the reaction RNA(n) + a ribonucleoside 5'-triphosphate = RNA(n+1) + diphosphate. Functionally, promotes RNA polymerase assembly. Latches the N- and C-terminal regions of the beta' subunit thereby facilitating its interaction with the beta and alpha subunits. The protein is DNA-directed RNA polymerase subunit omega of Idiomarina loihiensis (strain ATCC BAA-735 / DSM 15497 / L2-TR).